The chain runs to 225 residues: RNA chaperone ProQ (225 aa).

The interval 103 to 173 (LEEAKARVQT…APREERHTPV (71 aa)) is disordered. A compositionally biased stretch (low complexity) spans 109–118 (RVQTQRAAQQ). Basic residues predominate over residues 137–146 (RERKPRPQQP). A compositionally biased stretch (basic and acidic residues) spans 147–156 (RRKEGAEQRK).

This sequence belongs to the ProQ family.

It localises to the cytoplasm. RNA chaperone with significant RNA binding, RNA strand exchange and RNA duplexing activities. May regulate ProP activity through an RNA-based, post-transcriptional mechanism. In Klebsiella pneumoniae (strain 342), this protein is RNA chaperone ProQ.